Reading from the N-terminus, the 148-residue chain is Deoxyuridine 5'-triphosphate nucleotidohydrolase (148 aa).

Residues S69, G82, D85, Y88, R137, F142, and G143 each contribute to the dUMP site.

The protein belongs to the dUTPase family. Homotrimer. Mg(2+) serves as cofactor.

It catalyses the reaction dUTP + H2O = dUMP + diphosphate + H(+). It functions in the pathway pyrimidine metabolism; dUMP biosynthesis; dUMP from dCTP (dUTP route): step 2/2. Functionally, involved in nucleotide metabolism via production of dUMP, the immediate precursor of thymidine nucleotides, and decreases the intracellular concentration of dUTP so that uracil cannot be incorporated into DNA. In Kluyveromyces lactis (strain ATCC 8585 / CBS 2359 / DSM 70799 / NBRC 1267 / NRRL Y-1140 / WM37) (Yeast), this protein is Deoxyuridine 5'-triphosphate nucleotidohydrolase (DUT1).